Here is a 234-residue protein sequence, read N- to C-terminus: NAD-reducing hydrogenase HoxS subunit gamma (234 aa).

The 2Fe-2S ferredoxin-type domain occupies 2–77; it reads SIQITIDGKT…GLNVEVNDPE (76 aa). [2Fe-2S] cluster is bound by residues Cys-35, Cys-46, Cys-49, and Cys-61. Residues 77 to 116 form the 4Fe-4S His(Cys)3-ligated-type domain; that stretch reads ELVDMRKALVEFLFAEGNHNCPSCEKSGRCQLQAVGYEVD. [4Fe-4S] cluster is bound by residues His-95, Cys-97, Cys-100, Cys-106, Cys-145, Cys-148, Cys-151, and Cys-198.

It belongs to the complex I 75 kDa subunit family. As to quaternary structure, tetramer of an alpha and a gamma subunits (flavin-containing dimer), and a delta and a nickel-containing beta subunits (hydrogenase dimer). [2Fe-2S] cluster is required as a cofactor. [4Fe-4S] cluster serves as cofactor.

The protein resides in the cytoplasm. It catalyses the reaction H2 + NAD(+) = NADH + H(+). Its function is as follows. Subunits alpha and gamma of HoxS constitute an NADH--oxidoreductase. The polypeptide is NAD-reducing hydrogenase HoxS subunit gamma (hoxU) (Cupriavidus necator (strain ATCC 17699 / DSM 428 / KCTC 22496 / NCIMB 10442 / H16 / Stanier 337) (Ralstonia eutropha)).